The following is a 794-amino-acid chain: MAEESKAAEYFDPLDPLSFNELRYVVNLVRKSYPEKQISFDVVTLSEPHKEEYVHWRYSSAHEGIPDRRAYVIVLEKEVPGVFEGIVNLTTGKIEKWEHSVDTCPIITADLLAITDEIVRNDANVIEQCKICGVPESGLSNVYCDPWTIGYDERYGSGRRLQQALMYYKPGDSGHLRSIPLDFCPIIDVDQKKVIAIDIPKVRRPIPQDVNSDNNLKKLEQEMEAMKMLKPLRITQPEGVNFRIKGRYIEWQNFCFHIGFNYREGIVLSDVVFNEDGHLRPLFYRISLTEMAVPFGAKGHSHHRKHAYDLGEYGVGYRTNPLSFTCGCEGVIHYMDADFVNYRGEITTIKNAISIHEEDDGVLFKYSDLRDRNANISARSIKLVVSQVFTAANYEYLVYWIFRMDGVIECEIRLTGILNTNAINEDEDLKGHGTQVYPKISAENHEHLFCLRINPMLDGLRNSVATVDALRDKNGTLVSKYIIPETVTEAISNYDSSTGRTWDICNLNKLHPYSGKPVSYKLISRDTSPVLSQPGTTNSDCSGFAENNIYVTPYMDDQIFPTGDYAPQASDDTPKGLSKWISDDPNAQIKNTDIVVWHTFGMIHFPAPEDFPIMPAESIHLFLQPRNFFKHNPALDTSSSVNSTSEATSPNTHHENLRDTSQKRESHSTPHDYEPHVSDKNDKSVEDKLHFVQKDESRPKEPVVDAAQKHEGRSETLAQPGQQNANQSEEKQGGQNGSNGGHHHHHHHHYITGHVYGGYHKHSGSGGHLVDMMKNISDVTHDFAMGNFRYHKYD.

Substrate contacts are provided by residues Ala307–Arg318 and Ala391–Tyr396. Catalysis depends on Asp309, which acts as the Proton acceptor. The Schiff-base intermediate with substrate; via topaquinone role is filled by Tyr394. The residue at position 394 (Tyr394) is a 2',4',5'-topaquinone. Cu cation contacts are provided by His445 and His447. The disordered stretch occupies residues Gly563–Asp584. 2 residues coordinate Mn(2+): Asp593 and Ile594. Position 604 (His604) interacts with Cu cation. The tract at residues Ala634–His748 is disordered. Positions Thr637–Ser649 are enriched in low complexity. Residues Thr652–Ser714 are compositionally biased toward basic and acidic residues. Positions Thr716–Gln727 are enriched in polar residues.

The protein belongs to the copper/topaquinone oxidase family. As to quaternary structure, homodimer. The cofactor is Cu cation. Zn(2+) is required as a cofactor. It depends on L-topaquinone as a cofactor. Mn(2+) serves as cofactor. Post-translationally, topaquinone (TPQ) is generated by copper-dependent autoxidation of a specific tyrosyl residue.

It is found in the cytoplasm. The catalysed reaction is a primary methyl amine + O2 + H2O = an aldehyde + H2O2 + NH4(+). In terms of biological role, copper amine oxidase-like protein that does not show any copper amine oxidase activity. May be the appropriate amine substrate for cao2 has not been identified yet. This Schizosaccharomyces pombe (strain 972 / ATCC 24843) (Fission yeast) protein is Copper amine oxidase-like protein cao2 (cao2).